A 169-amino-acid chain; its full sequence is Lipoprotein signal peptidase (169 aa).

The next 3 helical transmembrane spans lie at 12–32, 70–90, and 102–122; these read WLWL…WILG, WFFA…MYRS, and AFII…GFVV. Residues Asp123 and Asp141 contribute to the active site. The chain crosses the membrane as a helical span at residues 137 to 157; the sequence is FNLADSFICVGAAMIVLEGFL.

This sequence belongs to the peptidase A8 family.

It is found in the cell inner membrane. The enzyme catalyses Release of signal peptides from bacterial membrane prolipoproteins. Hydrolyzes -Xaa-Yaa-Zaa-|-(S,diacylglyceryl)Cys-, in which Xaa is hydrophobic (preferably Leu), and Yaa (Ala or Ser) and Zaa (Gly or Ala) have small, neutral side chains.. It participates in protein modification; lipoprotein biosynthesis (signal peptide cleavage). Functionally, this protein specifically catalyzes the removal of signal peptides from prolipoproteins. The sequence is that of Lipoprotein signal peptidase from Serratia proteamaculans (strain 568).